A 488-amino-acid polypeptide reads, in one-letter code: GTPase Der (488 aa).

EngA-type G domains follow at residues 3-166 and 200-373; these read PVVA…AEAM and IKLA…DSAT. Residues 9–16, 56–60, 118–121, 206–213, 253–257, and 318–321 contribute to the GTP site; these read GRPNVGKS, DTGGI, NKVD, GKPNVGKS, DTAGV, and NKWD. Residues 374–458 enclose the KH-like domain; the sequence is RRVSTSMLTR…PIQLRFHEGD (85 aa).

It belongs to the TRAFAC class TrmE-Era-EngA-EngB-Septin-like GTPase superfamily. EngA (Der) GTPase family. Associates with the 50S ribosomal subunit.

Its function is as follows. GTPase that plays an essential role in the late steps of ribosome biogenesis. The chain is GTPase Der from Shewanella amazonensis (strain ATCC BAA-1098 / SB2B).